We begin with the raw amino-acid sequence, 269 residues long: Enoyl-[acyl-carrier-protein] reductase [NADH] (269 aa).

Residues 20-21 (SI), 64-65 (DV), and 95-96 (IG) contribute to the NAD(+) site. Tyr-158 lines the substrate pocket. Residues Lys-165 and Ile-194 each coordinate NAD(+).

Belongs to the short-chain dehydrogenases/reductases (SDR) family. FabI subfamily. As to quaternary structure, homodimer. Homotetramer.

The enzyme catalyses a 2,3-saturated acyl-[ACP] + NAD(+) = a (2E)-enoyl-[ACP] + NADH + H(+). The catalysed reaction is a 2,3-saturated acyl-CoA + NAD(+) = a (2E)-enoyl-CoA + NADH + H(+). It participates in lipid metabolism; mycolic acid biosynthesis. Its function is as follows. Enoyl-ACP reductase of the type II fatty acid syntase (FAS-II) system, which is involved in the biosynthesis of mycolic acids, a major component of mycobacterial cell walls. Catalyzes the NADH-dependent reduction of the double bond of 2-trans-enoyl-[acyl-carrier protein], an essential step in the fatty acid elongation cycle of the FAS-II pathway. Shows preference for long-chain fatty acyl thioester substrates, and can also use 2-trans-enoyl-CoAs as alternative substrates. The mycobacterial FAS-II system utilizes the products of the FAS-I system as primers to extend fatty acyl chain lengths up to C56, forming the meromycolate chain that serves as the precursor for final mycolic acids. Is the primary target of the first-line antitubercular drug isoniazid (INH) and of the second-line drug ethionamide (ETH). Overexpressed inhA confers INH and ETH resistance to M.bovis. The mechanism of isoniazid action against InhA is covalent attachment of the activated form of the drug to the nicotinamide ring of NAD and binding of the INH-NAD adduct to the active site of InhA. Similarly, the ETH-NAD adduct binds InhA. This chain is Enoyl-[acyl-carrier-protein] reductase [NADH], found in Mycobacterium bovis (strain ATCC BAA-935 / AF2122/97).